Reading from the N-terminus, the 298-residue chain is Uricase (298 aa).

Catalysis depends on charge relay system residues lysine 18 and threonine 63. Urate contacts are provided by threonine 63, aspartate 64, phenylalanine 165, arginine 182, valine 229, glutamine 230, and asparagine 256. The active-site Charge relay system is the histidine 258. A Microbody targeting signal motif is present at residues 296–298; sequence ARM.

The protein belongs to the uricase family. In terms of assembly, homotetramer; dimer of dimers.

The protein resides in the peroxisome. It catalyses the reaction urate + O2 + H2O = 5-hydroxyisourate + H2O2. It functions in the pathway purine metabolism; urate degradation; (S)-allantoin from urate: step 1/3. With respect to regulation, competitively inhibited by xanthine. Catalyzes the oxidation of uric acid to 5-hydroxyisourate, which is further processed to form (S)-allantoin. This Danio rerio (Zebrafish) protein is Uricase.